Here is a 141-residue protein sequence, read N- to C-terminus: D-aminoacyl-tRNA deacylase (141 aa).

Positions 133–134 (GP) match the Gly-cisPro motif, important for rejection of L-amino acids motif.

It belongs to the DTD family. As to quaternary structure, homodimer.

It is found in the cytoplasm. The enzyme catalyses glycyl-tRNA(Ala) + H2O = tRNA(Ala) + glycine + H(+). It catalyses the reaction a D-aminoacyl-tRNA + H2O = a tRNA + a D-alpha-amino acid + H(+). Its function is as follows. An aminoacyl-tRNA editing enzyme that deacylates mischarged D-aminoacyl-tRNAs. Also deacylates mischarged glycyl-tRNA(Ala), protecting cells against glycine mischarging by AlaRS. Acts via tRNA-based rather than protein-based catalysis; rejects L-amino acids rather than detecting D-amino acids in the active site. By recycling D-aminoacyl-tRNA to D-amino acids and free tRNA molecules, this enzyme counteracts the toxicity associated with the formation of D-aminoacyl-tRNA entities in vivo and helps enforce protein L-homochirality. The protein is D-aminoacyl-tRNA deacylase of Beutenbergia cavernae (strain ATCC BAA-8 / DSM 12333 / CCUG 43141 / JCM 11478 / NBRC 16432 / NCIMB 13614 / HKI 0122).